We begin with the raw amino-acid sequence, 439 residues long: Vacuolar zinc transporter COT1 (439 aa).

The Cytoplasmic portion of the chain corresponds to 1 to 9 (MKLGSKQVK). The chain crosses the membrane as a helical span at residues 10–30 (IISLLLLDTVFFGIEITTGYL). Over 31–33 (SHS) the chain is Vacuolar. The chain crosses the membrane as a helical span at residues 34 to 54 (LALIADSFHMLNDIISLVVAL). The Cytoplasmic portion of the chain corresponds to 55 to 76 (WAVNVAKNRNPDSTYTYGWKRA). A helical membrane pass occupies residues 77 to 97 (EILGALINAVFLIALCVSILI). Topologically, residues 98 to 113 (EALQRIIAPPVIENPK) are vacuolar. The helical transmembrane segment at 114–134 (FVLYVGVAGLISNTVGLFLFH) threads the bilayer. Topologically, residues 135–244 (DNDQEHGHGH…RKRSLNMHGV (110 aa)) are cytoplasmic. Short sequence motifs (histidine repeat) lie at residues 140–144 (HGHGH), 165–169 (HTHAH), and 219–223 (SSHTI). Polar residues predominate over residues 207–230 (PENASKTPSYSTSSHTIASGGNYT). The disordered stretch occupies residues 207-231 (PENASKTPSYSTSSHTIASGGNYTE). Phosphoserine is present on S225. A helical membrane pass occupies residues 245–265 (FLHVLGDALGNIGVMLSAFFI). Residues 266 to 274 (WKTDYSWKY) are Vacuolar-facing. A helical membrane pass occupies residues 275–295 (YTDPLVSLIITGIIFSSALPL). At 296 to 439 (SCKASKILLQ…CNTADCLEDH (144 aa)) the chain is on the cytoplasmic side. K301 participates in a covalent cross-link: Glycyl lysine isopeptide (Lys-Gly) (interchain with G-Cter in ubiquitin). A compositionally biased stretch (basic and acidic residues) spans 388 to 402 (TSTERAGDSQGDHLQ). The tract at residues 388–408 (TSTERAGDSQGDHLQNDPLSL) is disordered.

This sequence belongs to the cation diffusion facilitator (CDF) transporter (TC 2.A.4) family. SLC30A subfamily.

Its subcellular location is the vacuole membrane. It catalyses the reaction Zn(2+)(in) = Zn(2+)(out). Functionally, vacuolar transporter that regulates zinc homeostasis by mediating zinc transport and storage into the vacuole. Plays a role in resistance to zinc shock resulting from sudden influx of zinc into cytoplasm. May also participate in the regulation of cobalt levels under normal physiological conditions and may be important in the supply of metal that is required for metalloenzyme or cofactor synthesis. Involved in the resistance to cobalt and rhodium ions. The polypeptide is Vacuolar zinc transporter COT1 (Saccharomyces cerevisiae (strain ATCC 204508 / S288c) (Baker's yeast)).